Here is a 436-residue protein sequence, read N- to C-terminus: GTPase Der (436 aa).

EngA-type G domains follow at residues 4 to 167 (PVVA…PKEE) and 176 to 351 (VKFS…DNHS). GTP is bound by residues 10–17 (GRPNVGKS), 57–61 (DTGGI), 119–122 (NKVD), 182–189 (GRPNVGKS), 229–233 (DTAGM), and 294–297 (NKWD). Residues 352 to 436 (LRVQSSMLND…PIRVIARKRK (85 aa)) enclose the KH-like domain.

This sequence belongs to the TRAFAC class TrmE-Era-EngA-EngB-Septin-like GTPase superfamily. EngA (Der) GTPase family. Associates with the 50S ribosomal subunit.

In terms of biological role, GTPase that plays an essential role in the late steps of ribosome biogenesis. The protein is GTPase Der of Listeria innocua serovar 6a (strain ATCC BAA-680 / CLIP 11262).